Reading from the N-terminus, the 632-residue chain is tRNA-guanine(15) transglycosylase (632 aa).

The active-site Nucleophile is D86. 2 residues coordinate substrate: D121 and G186. Positions 553 to 628 constitute a PUA domain; that stretch reads AMRVTVSKES…IAVKVHEGRD (76 aa).

The protein belongs to the archaeosine tRNA-ribosyltransferase family. Requires Zn(2+) as cofactor.

The enzyme catalyses guanosine(15) in tRNA + 7-cyano-7-deazaguanine = 7-cyano-7-carbaguanosine(15) in tRNA + guanine. It functions in the pathway tRNA modification; archaeosine-tRNA biosynthesis. Exchanges the guanine residue with 7-cyano-7-deazaguanine (preQ0) at position 15 in the dihydrouridine loop (D-loop) of archaeal tRNAs. The protein is tRNA-guanine(15) transglycosylase of Thermoplasma acidophilum (strain ATCC 25905 / DSM 1728 / JCM 9062 / NBRC 15155 / AMRC-C165).